The chain runs to 32 residues: MMVHLTLKSHLIKEELLWHALSPSYSCRYHGR.

This is an uncharacterized protein from Saccharomyces cerevisiae (strain ATCC 204508 / S288c) (Baker's yeast).